We begin with the raw amino-acid sequence, 556 residues long: Acetyl-coenzyme A thioesterase (556 aa).

The region spanning Ala-6–Gly-118 is the HotDog ACOT-type 1 domain. Position 34 is an N6-succinyllysine (Lys-34). CoA-binding positions include Thr-54–Ser-56 and Ser-83–Ser-85. An N6-succinyllysine modification is found at Lys-97. Arg-145 lines the CoA pocket. An N6-succinyllysine mark is found at Lys-160 and Lys-229. Residues Met-180–Gln-295 enclose the HotDog ACOT-type 2 domain. Lys-235 to Arg-237 is a CoA binding site. In terms of domain architecture, START spans Gly-341 to Asp-550.

As to quaternary structure, homodimer or homotetramer.

Its subcellular location is the cytoplasm. The protein localises to the cytosol. It carries out the reaction acetyl-CoA + H2O = acetate + CoA + H(+). The enzyme catalyses butanoyl-CoA + H2O = butanoate + CoA + H(+). It catalyses the reaction hexanoyl-CoA + H2O = hexanoate + CoA + H(+). It participates in lipid metabolism; fatty acid metabolism. Its activity is regulated as follows. Allosterically regulated by ATP (activator) and ADP (inhibitor). Cold labile, it dissociates into inactive monomers at low temperature. Functionally, catalyzes the hydrolysis of acyl-CoAs into free fatty acids and coenzyme A (CoASH), regulating their respective intracellular levels. Preferentially hydrolyzes acetyl-CoA. The protein is Acetyl-coenzyme A thioesterase (Acot12) of Rattus norvegicus (Rat).